The primary structure comprises 474 residues: MSKEERLAKDITHALGGSQNISNIIHCMTRVRIKVHNDAKVNYDELKSINGVLGVVEDERIQVVVGPGIVNKVAKLMADQSGATLAEETTENQSYKSQAEKRAYEHKKQFQSQRKQSKWNKVLKSIANIFIPLIPAFIGAGLIGGIAAILSNLLTAGSISGQWIQQIVTVLNVIKDGMLFYLAIFTGINSAKVFGATPGLGGVIGGTTLLTGITDENPIKNIFTGEHLAAGQGGIIGVIFAVWLLSMVEKRLHKIIPNSIDIIVTPTITLLLIGLLTIFIIMPLAGFVSDGLVYVINWIIGVGGIFSGFIIGAFFLPLVMLGLHHIFTPIHIELINQTGSTYLLPIAAMAGAGQVGAAIALWVRCGKNKELRNTLKGALPVGFLGIGEPLIYGVTLPLGRPFFTACIGGGVGGAVIGGIGHIGATAVGPSGISLLPLIANNMYLGYIVGLLAAYAGGFIFTYFFGTTKEMRNPE.

The 83-residue stretch at 5 to 87 (ERLAKDITHA…ADQSGATLAE (83 aa)) folds into the PTS EIIB type-1 domain. C27 functions as the Phosphocysteine intermediate; for EIIB activity in the catalytic mechanism. Positions 124-474 (KSIANIFIPL…GTTKEMRNPE (351 aa)) constitute a PTS EIIC type-1 domain. Transmembrane regions (helical) follow at residues 129-149 (IFIP…IAAI), 167-187 (IVTV…IFTG), 193-213 (VFGA…LTGI), 228-248 (LAAG…LSMV), 268-288 (ITLL…AGFV), 299-319 (IIGV…LPLV), 343-363 (LLPI…ALWV), 378-398 (ALPV…TLPL), 402-422 (FFTA…IGHI), and 444-464 (LGYI…TYFF).

It is found in the cell membrane. It catalyses the reaction N-acetyl-beta-D-muramate-(1-&gt;4)-N-acetyl-D-glucosamine(out) + N(pros)-phospho-L-histidyl-[protein] = 6-phospho-N-acetyl-beta-D-muramate-(1-&gt;4)-N-acetyl-D-glucosamine(in) + L-histidyl-[protein]. Its pathway is cell wall biogenesis; peptidoglycan recycling. The phosphoenolpyruvate-dependent sugar phosphotransferase system (sugar PTS), a major carbohydrate active transport system, catalyzes the phosphorylation of incoming sugar substrates concomitantly with their translocation across the cell membrane. This system is involved in the uptake and phosphorylation of MurNAc-GlcNAc, the principle peptidoglycan turnover product of S.aureus, yielding cytoplasmic MurNAc 6P-GlcNAc. The protein is PTS system MurNAc-GlcNAc-specific EIIBC component of Staphylococcus epidermidis (strain ATCC 35984 / DSM 28319 / BCRC 17069 / CCUG 31568 / BM 3577 / RP62A).